Here is a 339-residue protein sequence, read N- to C-terminus: Serine/arginine-rich splicing factor 6 (339 aa).

Residues 2–72 (PRVYIGRLSY…ERVIVEHARG (71 aa)) form the RRM 1 domain. 3 positions are modified to phosphoserine: Ser45, Ser81, and Ser84. The segment at 75–103 (RDRDGYSYGSRSGGGGYSSRRTSGRDKYG) is disordered. The 74-residue stretch at 110-183 (YRLIVENLSS…RNIRLIEDKP (74 aa)) folds into the RRM 2 domain. Lys165 is subject to N6-acetyllysine. Positions 176–339 (IRLIEDKPRT…RSRSRSSSRD (164 aa)) are disordered. Lys182 participates in a covalent cross-link: Glycyl lysine isopeptide (Lys-Gly) (interchain with G-Cter in SUMO2). The span at 185–250 (TSHRRSYSGS…RKSRSKSKSK (66 aa)) shows a compositional bias: basic residues. Residues 280 to 291 (SPKENGKGDIKS) show a composition bias toward basic and acidic residues. Residues Ser297 and Ser299 each carry the phosphoserine modification. A Phosphoserine; by DYRK1A modification is found at Ser303. Residues Ser314 and Ser316 each carry the phosphoserine modification. A compositionally biased stretch (basic residues) spans 321–339 (RASRSRSRSRSRSRSSSRD).

This sequence belongs to the splicing factor SR family. Binds SREK1/SFRS12. Interacts with DYRK1A. Interacts with RBMY; the interaction inhibits SRSF6 pre-mRNA splicing. Extensively phosphorylated on serine residues in the RS domain. Phosphorylated by DYRK1A, probably in the RS domain. Phosphorylation by DYRK1A modulates alternative splice site selection and inhibits the expression of MAPT/Tau exon 10.

The protein localises to the nucleus. It localises to the nucleus speckle. Plays a role in constitutive splicing and modulates the selection of alternative splice sites. Plays a role in the alternative splicing of MAPT/Tau exon 10. Binds to alternative exons of TNC pre-mRNA and promotes the expression of alternatively spliced TNC. Plays a role in wound healing and in the regulation of keratinocyte differentiation and proliferation via its role in alternative splicing. The sequence is that of Serine/arginine-rich splicing factor 6 (Srsf6) from Mus musculus (Mouse).